Reading from the N-terminus, the 181-residue chain is ATP synthase subunit delta (181 aa).

It belongs to the ATPase delta chain family. As to quaternary structure, F-type ATPases have 2 components, F(1) - the catalytic core - and F(0) - the membrane proton channel. F(1) has five subunits: alpha(3), beta(3), gamma(1), delta(1), epsilon(1). F(0) has three main subunits: a(1), b(2) and c(10-14). The alpha and beta chains form an alternating ring which encloses part of the gamma chain. F(1) is attached to F(0) by a central stalk formed by the gamma and epsilon chains, while a peripheral stalk is formed by the delta and b chains.

Its subcellular location is the cell inner membrane. Its function is as follows. F(1)F(0) ATP synthase produces ATP from ADP in the presence of a proton or sodium gradient. F-type ATPases consist of two structural domains, F(1) containing the extramembraneous catalytic core and F(0) containing the membrane proton channel, linked together by a central stalk and a peripheral stalk. During catalysis, ATP synthesis in the catalytic domain of F(1) is coupled via a rotary mechanism of the central stalk subunits to proton translocation. This protein is part of the stalk that links CF(0) to CF(1). It either transmits conformational changes from CF(0) to CF(1) or is implicated in proton conduction. The chain is ATP synthase subunit delta from Orientia tsutsugamushi (strain Boryong) (Rickettsia tsutsugamushi).